We begin with the raw amino-acid sequence, 555 residues long: Sulfite reductase [NADPH] hemoprotein beta-component (555 aa).

[4Fe-4S] cluster is bound by residues C430, C436, C475, and C479. C479 provides a ligand contact to siroheme.

Belongs to the nitrite and sulfite reductase 4Fe-4S domain family. Alpha(8)-beta(8). The alpha component is a flavoprotein, the beta component is a hemoprotein. Requires siroheme as cofactor. It depends on [4Fe-4S] cluster as a cofactor.

It catalyses the reaction hydrogen sulfide + 3 NADP(+) + 3 H2O = sulfite + 3 NADPH + 4 H(+). It participates in sulfur metabolism; hydrogen sulfide biosynthesis; hydrogen sulfide from sulfite (NADPH route): step 1/1. In terms of biological role, component of the sulfite reductase complex that catalyzes the 6-electron reduction of sulfite to sulfide. This is one of several activities required for the biosynthesis of L-cysteine from sulfate. This chain is Sulfite reductase [NADPH] hemoprotein beta-component, found in Leptospira biflexa serovar Patoc (strain Patoc 1 / Ames).